The primary structure comprises 440 residues: Chromosome partition protein MukF (440 aa).

The tract at residues 208–236 is leucine-zipper; it reads LSETSGTLRELQDTLEAAGDKLQANLLRI.

It belongs to the MukF family. Interacts, and probably forms a ternary complex, with MukE and MukB via its C-terminal region. The complex formation is stimulated by calcium or magnesium. It is required for an interaction between MukE and MukB.

It is found in the cytoplasm. The protein resides in the nucleoid. Its function is as follows. Involved in chromosome condensation, segregation and cell cycle progression. May participate in facilitating chromosome segregation by condensation DNA from both sides of a centrally located replisome during cell division. Not required for mini-F plasmid partitioning. Probably acts via its interaction with MukB and MukE. Overexpression results in anucleate cells. It has a calcium binding activity. In Salmonella typhi, this protein is Chromosome partition protein MukF.